The sequence spans 711 residues: DNA topoisomerase 3 (711 aa).

In terms of domain architecture, Toprim spans 2-135 (KSLILAEKPS…LRRLWISSVT (134 aa)). Residues glutamate 8 and aspartate 104 each contribute to the Mg(2+) site. The 429-residue stretch at 152–580 (YNDLYYAALA…EMKDFTKDVV (429 aa)) folds into the Topo IA-type catalytic domain. The tract at residues 186–191 (SLGRVQ) is interaction with DNA. The O-(5'-phospho-DNA)-tyrosine intermediate role is filled by tyrosine 305. Residues 691-711 (MNKNEGLDNNPFKDALKNLNL) are disordered.

Belongs to the type IA topoisomerase family. Mg(2+) is required as a cofactor.

It carries out the reaction ATP-independent breakage of single-stranded DNA, followed by passage and rejoining.. Functionally, releases the supercoiling and torsional tension of DNA, which is introduced during the DNA replication and transcription, by transiently cleaving and rejoining one strand of the DNA duplex. Introduces a single-strand break via transesterification at a target site in duplex DNA. The scissile phosphodiester is attacked by the catalytic tyrosine of the enzyme, resulting in the formation of a DNA-(5'-phosphotyrosyl)-enzyme intermediate and the expulsion of a 3'-OH DNA strand. The free DNA strand then undergoes passage around the unbroken strand, thus removing DNA supercoils. Finally, in the religation step, the DNA 3'-OH attacks the covalent intermediate to expel the active-site tyrosine and restore the DNA phosphodiester backbone. The chain is DNA topoisomerase 3 from Staphylococcus aureus (strain MRSA252).